We begin with the raw amino-acid sequence, 260 residues long: HMP-PP phosphatase (260 aa).

D8 serves as the catalytic Nucleophile. Mg(2+)-binding residues include D8, D10, and D212.

This sequence belongs to the HAD-like hydrolase superfamily. Cof family. The cofactor is Mg(2+).

The catalysed reaction is 4-amino-2-methyl-5-(diphosphooxymethyl)pyrimidine + H2O = 4-amino-2-methyl-5-(phosphooxymethyl)pyrimidine + phosphate + H(+). In terms of biological role, catalyzes the hydrolysis of 4-amino-2-methyl-5-hydroxymethylpyrimidine pyrophosphate (HMP-PP) to 4-amino-2-methyl-5-hydroxymethylpyrimidine phosphate (HMP-P). The polypeptide is HMP-PP phosphatase (Shigella boydii serotype 4 (strain Sb227)).